The primary structure comprises 333 residues: Bacteriocin helveticin-J (333 aa).

Its function is as follows. This heat-sensitive bacteriocin inhibits the growth of closely related Lactobacillus species. The sequence is that of Bacteriocin helveticin-J (hlv) from Lactobacillus helveticus (Lactobacillus suntoryeus).